A 154-amino-acid chain; its full sequence is SKP1-like protein 13 (154 aa).

Residues 96–154 (MLAANYLNIKDLLDLGCQTVADMITGKKPDEIRALLGIENDFTPEEEEEIRKENQWAFE) are interaction with the F-box domain of F-box proteins.

The protein belongs to the SKP1 family. Part of a SCF (SKP1-cullin-F-box) protein ligase complex. Interacts with ADO3/FKF1, EBF1, PP2A13, SKIP15, SKIP16, CPR1/CPR30, At1g55000, At3g61590, At1g67340, At1g78100, At3g04660, At4g38940, At4g39550 and At5g49610. In terms of tissue distribution, mostly expressed in inflorescences, and, to a lower extent, in seedlings and siliques. Also detected in cotyledons, leaves, pollen and seeds.

It localises to the nucleus. It participates in protein modification; protein ubiquitination. Involved in ubiquitination and subsequent proteasomal degradation of target proteins. Together with CUL1, RBX1 and a F-box protein, it forms a SCF E3 ubiquitin ligase complex. The functional specificity of this complex depends on the type of F-box protein. In the SCF complex, it serves as an adapter that links the F-box protein to CUL1. This is SKP1-like protein 13 (ASK13) from Arabidopsis thaliana (Mouse-ear cress).